Reading from the N-terminus, the 873-residue chain is Rho GTPase-activating protein gacJJ (873 aa).

The disordered stretch occupies residues 64–147 (DEPSSINTSS…NVNNSSNAPT (84 aa)). The segment covering 66-91 (PSSINTSSGNIGSNNNSSSNTPLTGS) has biased composition (low complexity). The segment covering 103–112 (IGGGGGGGDN) has biased composition (gly residues). Low complexity predominate over residues 113–144 (GITNSGNIGSSSNSDLKKSTSSGIVNVNNSSN). A PH domain is found at 301–402 (NPVREGYLKK…WTVLPIVIES (102 aa)). The 194-residue stretch at 428-621 (VPIEKTVSGN…SLIRDYQYIF (194 aa)) folds into the Rho-GAP domain. The region spanning 628–694 (EQKILAKSLY…PASYVELLPH (67 aa)) is the SH3 domain. The stretch at 715-761 (MLEMESTKTKNQEIDKNIKQLEITKKELESTINDLENEKAALENDPT) forms a coiled coil.

The protein resides in the cytoplasm. Functionally, rho GTPase-activating protein involved in the signal transduction pathway. This Dictyostelium discoideum (Social amoeba) protein is Rho GTPase-activating protein gacJJ (gacJJ).